Here is a 1778-residue protein sequence, read N- to C-terminus: Ankyrin repeat domain-containing protein 36C (1778 aa).

ANK repeat units follow at residues 64–93 (KERT…ELNL), 97–126 (EDRT…DPNI), 130–159 (FGRT…NIEE), 163–192 (DEYP…NINA), and 196–225 (LGRS…DVFS). 5 disordered regions span residues 260–365 (LSIN…DEQK), 501–526 (ALPA…VKDS), 538–653 (DSLT…QKQS), 671–1027 (RITG…QKQL), and 1051–1072 (IRGT…EKDS). Polar residues-rich tracts occupy residues 261–272 (SINSNPVSSQKQ) and 297–306 (KSGTVSSQKQ). Residues 539–555 (SLTSSEESSERPPLSTL) are compositionally biased toward low complexity. 2 stretches are compositionally biased toward basic and acidic residues: residues 585–596 (PAEKATSDDKDS) and 619–630 (PAEKATSDEKDS). Composition is skewed to polar residues over residues 631–653 (VSNI…QKQS) and 679–691 (GTVS…PSKA). Residues 794-813 (TSDEKDSFSNITREKKDGEI) show a composition bias toward basic and acidic residues. Ser829 is modified (phosphoserine). 2 stretches are compositionally biased toward basic and acidic residues: residues 840 to 849 (RGKEDGEKTR) and 862 to 881 (TSDE…DGET). Ser897 carries the post-translational modification Phosphoserine. The span at 907–917 (AREKKDGEKSR) shows a compositional bias: basic and acidic residues. A compositionally biased stretch (basic residues) spans 942–955 (RGKKHGEKTRRVSS). 2 stretches are compositionally biased toward polar residues: residues 983–992 (ISGTVSSQKQ) and 1005–1026 (VSNI…SQKQ). 4 coiled-coil regions span residues 1157–1187 (EQDL…QIHS), 1247–1333 (ELKD…YRIE), 1362–1480 (SETD…DHDQ), and 1544–1768 (VFEH…ILQH).

This sequence belongs to the ANKRD36 family.

This Homo sapiens (Human) protein is Ankyrin repeat domain-containing protein 36C (ANKRD36C).